A 69-amino-acid chain; its full sequence is U2-agatoxin-Ao1w (69 aa).

An N-terminal signal peptide occupies residues 1-20 (MRAIISLLLISAMVFSMIEA). Positions 21–34 (VPVEEGLQLFEGER) are excised as a propeptide. 3 disulfides stabilise this stretch: Cys37-Cys53, Cys44-Cys58, and Cys52-Cys68.

Belongs to the neurotoxin 01 (U2-agtx) family. Expressed by the venom gland.

It is found in the secreted. In terms of biological role, insect active toxin causing rapid but reversible paralysis in crickets. No activity shown in mammals. Does not show effect on mammalian voltage-gated calcium channels. This Agelena orientalis (Funnel-web spider) protein is U2-agatoxin-Ao1w.